A 380-amino-acid chain; its full sequence is MRNCKMARVASVLGLVMLSVALLILSLISYVSLKKENIFTTPKYASPGAPRMYMFHAGFRSQFALKFLDQSFVPITNSLTHELQEKPSKWTFNRTAFLHQRQEILQHVDVIKNFSLTKSSVRIGQLMHYDYSSHKYVFSISNNFRSLLPDVSPIMNKRYNVCAVVGNSGILTGSQCGQEIDKSDFVFRCNFAPTEAFHKDVGRKTNLTTFNPSILEKYYNNLLTIQDRNNFFLSLKKLDGAILWIPAFFFHTSATVTRTLVDFFVEHRGQLKVQLAWPGNIMQHVNRYWKNKHLSPKRLSTGILMYTLASAICEEIHLYGFWPFGFDPNTREDLPYHYYDKKGTKFTTKWQESHQLPAEFQLLYRMHGEGLTKLTLSHCA.

The Cytoplasmic segment spans residues 1–17 (MRNCKMARVASVLGLVM). The helical; Signal-anchor for type II membrane protein transmembrane segment at 18–33 (LSVALLILSLISYVSL) threads the bilayer. Topologically, residues 34–380 (KKENIFTTPK…LTKLTLSHCA (347 aa)) are lumenal. N-linked (GlcNAc...) asparagine glycosylation is found at N93 and N113. Cystine bridges form between C162-C313 and C176-C379. Positions 167 and 190 each coordinate CMP-N-acetyl-beta-neuraminate. N-linked (GlcNAc...) asparagine glycosylation occurs at N206. S300, T301, G302, W322, Y336, and H337 together coordinate CMP-N-acetyl-beta-neuraminate. H354 functions as the Proton donor/acceptor in the catalytic mechanism.

It belongs to the glycosyltransferase 29 family. As to quaternary structure, homodimer. As to expression, expressed in neurons in brain with higher expression in the striatum than in the hippocampus, cortex, and cerebellum (at protein level). Expressed in testes.

The protein resides in the golgi apparatus membrane. The catalysed reaction is a ganglioside GM3 (d18:1(4E)) + CMP-N-acetyl-beta-neuraminate = a ganglioside GD3 (d18:1(4E)) + CMP + H(+). It carries out the reaction a ganglioside GM3 + CMP-N-acetyl-beta-neuraminate = a ganglioside GD3 + CMP + H(+). The enzyme catalyses an N-acetyl-alpha-neuraminyl-(2-&gt;3)-beta-D-galactosyl derivative + CMP-N-acetyl-beta-neuraminate = an N-acetyl-alpha-neuraminyl-(2-&gt;8)-N-acetyl-alpha-neuraminyl-(2-&gt;3)-beta-D-galactosyl derivative + CMP + H(+). It catalyses the reaction an N-acetyl-alpha-neuraminyl-(2-&gt;3)-beta-D-galactosyl-(1-&gt;4)-N-acetyl-beta-D-glucosaminyl derivative + CMP-N-acetyl-beta-neuraminate = an alpha-Neu5Ac-(2-&gt;8)-alpha-Neu5Ac-(2-&gt;3)-beta-D-Gal-(1-&gt;4)-beta-D-GlcNAc derivative + CMP + H(+). Its pathway is protein modification; protein glycosylation. Functionally, catalyzes the transfer of sialic acid from a CMP-linked sialic acid donor onto a terminal alpha-2,3-, alpha-2,6-, or alpha-2,8-linked sialic acid of an acceptor, such as N-linked oligosaccharides of glycoproteins and glycolipids through alpha-2,8-linkages. Forms oligosialic and polysialic acid on various sialylated N-acetyllactosamine oligosaccharides of glycoproteins, including FETUB N-glycans, a2-HS-glycoprotein (AHSG) and alpha 2,3-sialylated glycosphingolipids, such as alpha 2,3-sialylparagloboside and ganglioside GM3 and to a lesser extent NCAM1 N-glycans. However, it is much more specific to N-linked oligosaccharides of glycoproteins than glycosphingolipids. 2,3-sialylparagloboside served as the best acceptor substrate among the glycolipids. alpha-Neu5Ac-(2-&gt;8)-alpha-Neu5Ac-(2-&gt;3)-beta-D-Gal-(1-&gt;4)-6S-D-GlcNAc and monosialyl and disialyl N-acetyllactosamines are the best acceptor substrates among glycoproteins. May play critical role in the striatum by mediating the formation of disialylated and trisialylated terminal glycotopes on N- and O-glycans of specific striatal proteins, regulating their distribution in lipid rafts, affecting their interaction with other binding partners, and subsequently modulating striatal functions. The sequence is that of Alpha-N-acetylneuraminate alpha-2,8-sialyltransferase ST8SIA3 from Mus musculus (Mouse).